Here is a 308-residue protein sequence, read N- to C-terminus: Low density lipoprotein receptor adapter protein 1 (308 aa).

Residue M1 is modified to N-acetylmethionine. Phosphoserine is present on S14. The PID domain occupies 41–195; it reads LLEGMVFSLK…QEGGDVPGTR (155 aa). Residues 179–201 are disordered; sequence EKREKANQEGGDVPGTRRDSTPS. A phosphoserine mark is found at S198 and S201. The Clathrin box motif lies at 211 to 215; it reads LLDLE. The tract at residues 248-275 is AP-2 complex binding; the sequence is WELDDGLDEAFSRLAQSRTNPQVLDTGL. A [DE]-X(1,2)-F-X-X-[FL]-X-X-X-R motif motif is present at residues 256–265; sequence EAFSRLAQSR. The segment at 288-308 is disordered; it reads PTDWDKPDSSGIDQDDDVFTF.

As to quaternary structure, interacts (via PID domain) with LDLR (via NPXY motif). Binds to soluble clathrin trimers. Interacts with AP2B1; the interaction mediates the association with the AP-2 complex. Interacts with VLDLR. Interacts with LRP2.

The protein localises to the cytoplasm. Its function is as follows. Adapter protein (clathrin-associated sorting protein (CLASP)) required for efficient endocytosis of the LDL receptor (LDLR) in polarized cells such as hepatocytes and lymphocytes, but not in non-polarized cells (fibroblasts). May be required for LDL binding and internalization but not for receptor clustering in coated pits. May facilitate the endocytosis of LDLR and LDLR-LDL complexes from coated pits by stabilizing the interaction between the receptor and the structural components of the pits. May also be involved in the internalization of other LDLR family members. Binds to phosphoinositides, which regulate clathrin bud assembly at the cell surface. Required for trafficking of LRP2 to the endocytic recycling compartment which is necessary for LRP2 proteolysis, releasing a tail fragment which translocates to the nucleus and mediates transcriptional repression. The sequence is that of Low density lipoprotein receptor adapter protein 1 from Mus musculus (Mouse).